A 225-amino-acid chain; its full sequence is Urease accessory protein UreF (225 aa).

This sequence belongs to the UreF family. As to quaternary structure, ureD, UreF and UreG form a complex that acts as a GTP-hydrolysis-dependent molecular chaperone, activating the urease apoprotein by helping to assemble the nickel containing metallocenter of UreC. The UreE protein probably delivers the nickel.

It is found in the cytoplasm. Required for maturation of urease via the functional incorporation of the urease nickel metallocenter. This Thermosynechococcus vestitus (strain NIES-2133 / IAM M-273 / BP-1) protein is Urease accessory protein UreF.